The primary structure comprises 475 residues: Aspartyl/glutamyl-tRNA(Asn/Gln) amidotransferase subunit B (475 aa).

The protein belongs to the GatB/GatE family. GatB subfamily. In terms of assembly, heterotrimer of A, B and C subunits.

The catalysed reaction is L-glutamyl-tRNA(Gln) + L-glutamine + ATP + H2O = L-glutaminyl-tRNA(Gln) + L-glutamate + ADP + phosphate + H(+). The enzyme catalyses L-aspartyl-tRNA(Asn) + L-glutamine + ATP + H2O = L-asparaginyl-tRNA(Asn) + L-glutamate + ADP + phosphate + 2 H(+). Allows the formation of correctly charged Asn-tRNA(Asn) or Gln-tRNA(Gln) through the transamidation of misacylated Asp-tRNA(Asn) or Glu-tRNA(Gln) in organisms which lack either or both of asparaginyl-tRNA or glutaminyl-tRNA synthetases. The reaction takes place in the presence of glutamine and ATP through an activated phospho-Asp-tRNA(Asn) or phospho-Glu-tRNA(Gln). This is Aspartyl/glutamyl-tRNA(Asn/Gln) amidotransferase subunit B from Thiobacillus denitrificans (strain ATCC 25259 / T1).